Here is a 396-residue protein sequence, read N- to C-terminus: Elongation factor Tu (396 aa).

Residues 10 to 206 (KPHVNVGTIG…ALDTYIPTPE (197 aa)) enclose the tr-type G domain. Residues 19–26 (GHVDHGKT) are G1. Position 19-26 (19-26 (GHVDHGKT)) interacts with GTP. Threonine 26 contributes to the Mg(2+) binding site. The segment at 60 to 64 (GITIN) is G2. The segment at 81-84 (DCPG) is G3. GTP-binding positions include 81-85 (DCPGH) and 136-139 (NKCD). Positions 136 to 139 (NKCD) are G4. The segment at 174–176 (SAK) is G5.

This sequence belongs to the TRAFAC class translation factor GTPase superfamily. Classic translation factor GTPase family. EF-Tu/EF-1A subfamily. As to quaternary structure, monomer.

It localises to the cytoplasm. The catalysed reaction is GTP + H2O = GDP + phosphate + H(+). Its function is as follows. GTP hydrolase that promotes the GTP-dependent binding of aminoacyl-tRNA to the A-site of ribosomes during protein biosynthesis. This chain is Elongation factor Tu, found in Paraburkholderia xenovorans (strain LB400).